We begin with the raw amino-acid sequence, 432 residues long: MTENEKSRSLPAERNPLYKDDTLDHTPLIPKCRAQVIEFPDGPATFVRLKCTNPESKVPHFLMRMAKDSSISATSMFRSAFPKATQEEEDLEMRWIRDNLNPIEDKRVAGLWVPPADALALAKDYSMTPFINALLEASSTPSTYATPSRPTAQKSETSEGEPESSTSATTTSVARRTRQRLAEHLENSKKTILQHDNKEEDKEIHSEENETKDEIKSEKKEPEIKKQEGGSSTEKVGQPSSSDDKAKGSTSKDQPSEEEEKTSDIQDRKIKTPIKPSLLGKIRSSVNKGMTDVASQVNRGMTDVASQVNKGVNGVASQVNKGMNGVANQVNKGVTGVASQVRKPVGKLEKKFENLEKSIGDTLKSSIRSSPKSKKRSREDFEENEDYNAMVPVKRSRITKLESEVYYEKRKVRALGGIAIGLGVGAILPFLF.

The interval Met-1–Asp-21 is disordered. An HTH APSES-type domain is found at Glu-38–Pro-147. Residues Ala-73–Arg-94 constitute a DNA-binding region (H-T-H motif). Composition is skewed to low complexity over residues Ser-139 to Ala-152 and Glu-163 to Ser-172. Disordered stretches follow at residues Ser-139–Arg-283 and Lys-364–Asn-384. The segment covering Arg-180–Glu-228 has biased composition (basic and acidic residues). The segment covering Gly-229 to Ser-241 has biased composition (polar residues).

As to quaternary structure, interacts with rap1.

The protein localises to the cytoplasm. It localises to the nucleus. It is found in the nucleus inner membrane. In terms of biological role, connects telomeres to the nuclear envelop (NE) during both vegetative growth and meiosis. This connection ensures clustering of telomeres to the spindle pole body (SPB) when cells enter meiotic prophase. The protein is Bouquet formation protein 4 (bqt4) of Schizosaccharomyces pombe (strain 972 / ATCC 24843) (Fission yeast).